A 148-amino-acid chain; its full sequence is Flavodoxin (148 aa).

Residues 4–145 (VLIVYGSTTG…DVSAWAGRVV (142 aa)) enclose the Flavodoxin-like domain.

This sequence belongs to the flavodoxin family. FMN is required as a cofactor.

Its function is as follows. Low-potential electron donor to a number of redox enzymes. The sequence is that of Flavodoxin from Nitratidesulfovibrio vulgaris (strain DSM 19637 / Miyazaki F) (Desulfovibrio vulgaris).